The sequence spans 212 residues: Troponin I, cardiac muscle (212 aa).

Polar residues predominate over residues 1–11 (MADRSGGSTAG). The interval 1-45 (MADRSGGSTAGDTVPAPPPVRRRSSANYRAYATEPHAKKKSKISA) is disordered. A2 is modified (N-acetylalanine). The residue at position 5 (S5) is a Phosphoserine. Phosphoserine; by PKA and PKD/PRKD1 occurs at positions 24 and 25. Position 28 is a phosphotyrosine (Y28). T33 is subject to Phosphothreonine; by STK4/MST1. The tract at residues 34–81 (EPHAKKKSKISASRKLQLKTLMLQIAKQELEREAEERRGEKGRALSTR) is involved in binding TNC. Residues S44 and S46 each carry the phosphoserine; by PKC/PRKCE modification. T53 bears the Phosphothreonine; by STK4/MST1 mark. S79 carries the post-translational modification Phosphoserine. T80 carries the post-translational modification Phosphothreonine. The involved in binding TNC and actin stretch occupies residues 131–151 (NQKIFDLRGKFKRPTLRRVRI). T145 carries the post-translational modification Phosphothreonine; by STK4/MST1. A Phosphoserine; by PAK3 modification is found at S152. At T183 the chain carries Phosphothreonine. S201 is subject to Phosphoserine.

The protein belongs to the troponin I family. As to quaternary structure, interacts with TRIM63. Binds to actin and tropomyosin. Interacts with STK4/MST1. Post-translationally, phosphorylated at Ser-24 and Ser-25 by PRKD1; phosphorylation reduces myofilament calcium sensitivity. Phosphorylated preferentially at Thr-33. Phosphorylation by STK4/MST1 alters its binding affinity to TNNC1 (cardiac Tn-C) and TNNT2 (cardiac Tn-T). Phosphorylated at Ser-44 and Ser-46 by PRKCE; phosphorylation increases myocardium contractile dysfunction.

Functionally, troponin I is the inhibitory subunit of troponin, the thin filament regulatory complex which confers calcium-sensitivity to striated muscle actomyosin ATPase activity. The sequence is that of Troponin I, cardiac muscle (TNNI3) from Bos taurus (Bovine).